We begin with the raw amino-acid sequence, 186 residues long: MTYRWILPMALLLCFSTTALSVNYDLLRSQLRSSNSACLMLLRQLNGAPQRCPEDTMNFQVPEEIEQAQQFQKEDAALVIYEMLQHTWRIFRRNFASTGWNETIVKNLLVEVHLQMDRLETNLEEIMEEESSTWGNTTILRLKKYYGRISQYLKAKKYSHCAWTVVQAEMLRNLAFLNGLTDYLQN.

The first 21 residues, 1–21, serve as a signal peptide directing secretion; the sequence is MTYRWILPMALLLCFSTTALS. At Tyr24 the chain carries Phosphotyrosine. An intrachain disulfide couples Cys52 to Cys161. Asn101 and Asn136 each carry an N-linked (GlcNAc...) asparagine glycan.

It belongs to the alpha/beta interferon family. Monomer.

It is found in the secreted. Functionally, type I interferon cytokine that plays a key role in the innate immune response to infection, developing tumors and other inflammatory stimuli. Signals via binding to high-affinity (IFNAR2) and low-affinity (IFNAR1) heterodimeric receptor, activating the canonical Jak-STAT signaling pathway resulting in transcriptional activation or repression of interferon-regulated genes that encode the effectors of the interferon response, such as antiviral proteins, regulators of cell proliferation and differentiation, and immunoregulatory proteins. Signals mostly via binding to a IFNAR1-IFNAR2 heterodimeric receptor, but can also function with IFNAR1 alone and independently of Jak-STAT pathways. Elicits a wide variety of responses, including antiviral and antibacterial activities, and can regulate the development of B-cells, myelopoiesis and lipopolysaccharide (LPS)-inducible production of tumor necrosis factor. Plays a role in neuronal homeostasis by regulating dopamine turnover and protecting dopaminergic neurons: acts by promoting neuronal autophagy and alpha-synuclein clearance, thereby preventing dopaminergic neuron loss. IFNB1 is more potent than interferon-alpha (IFN-alpha) in inducing the apoptotic and antiproliferative pathways required for control of tumor cell growth. In Equus caballus (Horse), this protein is Interferon beta (IFNB1).